A 254-amino-acid polypeptide reads, in one-letter code: Alcohol dehydrogenase (254 aa).

10 to 33 provides a ligand contact to NAD(+); that stretch reads FVAGLGGIGLDTSREIVKSGPKNL. Ser138 lines the substrate pocket. Tyr151 functions as the Proton acceptor in the catalytic mechanism.

This sequence belongs to the short-chain dehydrogenases/reductases (SDR) family. In terms of assembly, homodimer.

The enzyme catalyses a primary alcohol + NAD(+) = an aldehyde + NADH + H(+). It carries out the reaction a secondary alcohol + NAD(+) = a ketone + NADH + H(+). The sequence is that of Alcohol dehydrogenase (Adh) from Drosophila grimshawi (Hawaiian fruit fly).